A 395-amino-acid polypeptide reads, in one-letter code: F-box protein At5g46170 (395 aa).

In terms of domain architecture, F-box spans 24–72 (IDHFDHLPDSILLLVFNKIGDVKALGRCCVVSRRFHSLVPQVDNVVVRV). Positions 122–158 (TKRSSSSCGGSGSSSSSLSISGDDDGGEIEQGGVTHH) are disordered. Residues 125 to 142 (SSSSCGGSGSSSSSLSIS) show a composition bias toward low complexity.

This Arabidopsis thaliana (Mouse-ear cress) protein is F-box protein At5g46170.